A 44-amino-acid polypeptide reads, in one-letter code: Thymosin beta-4 (44 aa).

Over residues 1–25 (MSDKPDMAEIEKFDKSKLKKTETQE) the composition is skewed to basic and acidic residues. The disordered stretch occupies residues 1-44 (MSDKPDMAEIEKFDKSKLKKTETQEKNPLPSKETIEQEKQAGES). Ser2 carries the post-translational modification N-acetylserine. A Phosphoserine modification is found at Ser2. An N6-acetyllysine modification is found at Lys4. Lys12 is modified (N6-acetyllysine; alternate). A Glycyl lysine isopeptide (Lys-Gly) (interchain with G-Cter in SUMO2); alternate cross-link involves residue Lys12. A Phosphothreonine modification is found at Thr23. Lys26 is modified (N6-acetyllysine). A Phosphoserine modification is found at Ser31. Lys32 bears the N6-acetyllysine mark. Residues 33 to 44 (ETIEQEKQAGES) show a composition bias toward basic and acidic residues. Residue Thr34 is modified to Phosphothreonine. Lys39 is modified (N6-acetyllysine).

The protein belongs to the thymosin beta family. As to quaternary structure, identified in a complex composed of ACTA1, COBL, GSN AND TMSB4X. Interacts with SERPINB1. AcSDKP is inactivated by ACE, which removes the dipeptide Lys-Pro from its C-terminus.

Its subcellular location is the cytoplasm. The protein localises to the cytoskeleton. Functionally, plays an important role in the organization of the cytoskeleton. Binds to and sequesters actin monomers (G actin) and therefore inhibits actin polymerization. Its function is as follows. Potent inhibitor of bone marrow derived stem cell differentiation. Acts by inhibits the entry of hematopoietic pluripotent stem cells into the S-phase. This is Thymosin beta-4 (TMSB4) from Bos taurus (Bovine).